The sequence spans 233 residues: Zinc metalloproteinase recombinant fibrinogenase II (233 aa).

The region spanning 19–215 is the Peptidase M12B domain; it reads KYVETVFVVD…HNPECIDNEP (197 aa). 2 residues coordinate Ca(2+): glutamate 22 and aspartate 106. Disulfide bonds link cysteine 130-cysteine 210, cysteine 170-cysteine 194, and cysteine 172-cysteine 177. A Zn(2+)-binding site is contributed by histidine 155. Glutamate 156 is an active-site residue. Histidine 159 and histidine 165 together coordinate Zn(2+). An N-linked (GlcNAc...) asparagine glycan is attached at asparagine 193. Cysteine 210, asparagine 213, asparagine 228, leucine 230, and glutamate 232 together coordinate Ca(2+).

Belongs to the venom metalloproteinase (M12B) family. P-III subfamily. Zn(2+) serves as cofactor. Expressed by the venom gland.

It localises to the secreted. Its activity is regulated as follows. Inhibited by PMSF and EDTA. Slightly inhibited by Cu(2+) and Zn(2+). Not inhibited by aprotinin, SBTI, Ca(2+), Mg(2+), Na(+) and K(+). In terms of biological role, snake venom zinc metalloprotease that acts at several levels. It has direct fibrino(geno)lytic activity (Aalpha chain of fibrinogen is cleaved quickly, Bbeta chain slowly, and gamma chain even more slowly) and degradation of TNF-alpha. These activities permit to protect against sepsis and disseminated intravascular coagulation. It inhibits ADP-induced platelet aggregation in human platelet-rich plasma (IC(50)=65.4 ug/ml). It decreases the activity of complement by degrading human C5, C6 and C9 in vitro, decreasing serum levels of C1q, C3 and C4 in rat, and inhibiting the MAC deposition on HUVECs membrane. This inhibition of complement protects against hyperacute rejection that is the main barrier in xenotransplantation. Has preference for Lys at the P1 position. Cleaves insulin B chain at '36-Val-|-Glu-37', '39-Leu-|-Tyr-40', and '48-Phe-|-Phe-49' bonds. Also cleaves fibronectin and type IV collagen. In Deinagkistrodon acutus (Hundred-pace snake), this protein is Zinc metalloproteinase recombinant fibrinogenase II.